The chain runs to 306 residues: Shugoshin (306 aa).

A coiled-coil region spans residues 28-75 (NFKSTNESLIKKNLQLKQQLSQCTKALEKLRNENIALREQNQELIDAT). 2 disordered regions span residues 122–196 (PEPS…GRRS) and 223–306 (IAPS…DTFF). Residues 133–161 (PKMECNLEKLDESPVRNFPRSDYEEENKS) are compositionally biased toward basic and acidic residues. The span at 167 to 181 (NGPSSSSSMTQNLEN) shows a compositional bias: polar residues. Over residues 230 to 241 (GGPPKKAPPRKA) the composition is skewed to pro residues.

Belongs to the shugoshin family.

The protein localises to the nucleus. It localises to the chromosome. Its subcellular location is the centromere. Its function is as follows. Plays a central role in chromosome cohesion during cell division by preventing premature dissociation of cohesin complex from centromeres after prophase, when most of cohesin complex dissociates from chromosomes arms. This chain is Shugoshin (sgo-1), found in Caenorhabditis briggsae.